A 1054-amino-acid polypeptide reads, in one-letter code: MNWHFLRTATVLLIFLVVVEINSEFRIQVRDYNTKNGTIKWHSIRRQKREWIKFAAACREGEDNSKRNPIAKIHSDCAANQQVTYRISGVGIDQPPYGIFIINQKTGEINITSIVDREITPFFIIYCRALNSLGQDLERPLELRVRVLDINDNPPVFSMSTFVGQIEENSNANTLVMRLNATGADEPNNLNSKIAFKIIRQEPSDSPMFIINRNTGEIRTMNNFLDREQYSQYSLAVRGSDRDGGADGMSAECECNIKILDVNDNIPYMEPSSHMVRIEENALSQNLVEIRVIDLDEEFSANWMAVIFFISGNEGGWFDIEMNERTNVGILKVIKPLDYEAVQNLQLSLGVRNKADFHHSIMSQYKVTATAISVTVLNVIEGSVFRPGSKTYVVRSDMGQNYKVGDFVATDLDTGLASTTVRYVMGNNPANLLNVDSKTGVITLRNKVTMEQYEMLNGKYQGTILSIDDALQRTCTGTINIDLQGSGWEKDSEKVTSSQNSGSSTGDSSGGTGGGGRENPSEGDTTTNTGGKTSTDYEDGETQTQSNNNHQELGSNNLSDNVHFGPAGIGLLIMGFLVLGLVPFLLMCCDCGGAPGAGAGFEPVPECSDGAIHSWAVEGPQPLPTDATTVCVPPIPSNNANVIECIDTSGVYTNEYGGREMQDLGGGERTTGFELTEGVKTSGVPEICQEYSGTLRRNSMRECREGGLNMNFMESYFCQKAYAYADEDEGRPSNDCLLIYDIEGVGSPAGSVGCCSFIGEDLDDSFLDTLGPKFKKLADISLGKEVEPDPSWPPESTEPICPQQGTEPIIGGHPPISPHFGTTTVISENTYPSGPGVQHPMPIPDPLGYGNVTVTESYTTSGTLKPTVHVHDNRHASNVVVTERVVGPISGTDLHGMLEMPDLRDGSNVIVTERVIAPSSSLPTSLTMPDPRESSNVVVTERVIRPASGMMGNLSIHPELSNAQNVIVTERVVSGSGISGISGLVGSAMGVSGGGMAMNSLGGGGGLSSSMGGTATIGHVRSSSDHHFSQTLGSASPSTARSRITKYSTVQYTK.

Residues M1–S23 form the signal peptide. Residues E24–R49 constitute a propeptide that is removed on maturation. N36, N110, and N180 each carry an N-linked (GlcNAc...) asparagine glycan. Cadherin domains lie at E50–F157, S158–M269, E270–S389, and R386–E493. Over E50–P566 the chain is Extracellular. The disordered stretch occupies residues G487–G554. Low complexity predominate over residues T496 to D507. Over residues S508–R517 the composition is skewed to gly residues. Low complexity predominate over residues G523–S534. The segment covering T542–G554 has biased composition (polar residues). Residue N557 is glycosylated (N-linked (GlcNAc...) asparagine). Residues A567 to M587 traverse the membrane as a helical segment. Residues C588–K1054 are Cytoplasmic-facing. Desmoglein repeat repeat units lie at residues T830–E856, S857–V886, G887–I916, A917–I944, and R945–V973. The tract at residues G1018–A1040 is disordered. Residues S1029–A1040 show a composition bias toward polar residues.

As to quaternary structure, binds to JUP/plakoglobin. Interacts with PKP2. Interacts with DSC3; there is evidence to suggest that the interaction promotes cell-cell adhesion of keratinocytes.

The protein localises to the cell membrane. It is found in the cell junction. It localises to the desmosome. Its subcellular location is the cytoplasm. The protein resides in the nucleus. Its function is as follows. Component of intercellular desmosome junctions. Involved in the interaction of plaque proteins and intermediate filaments mediating cell-cell adhesion. The sequence is that of Desmoglein-1 (DSG1) from Canis lupus familiaris (Dog).